We begin with the raw amino-acid sequence, 60 residues long: Large ribosomal subunit protein bL32 (60 aa).

The tract at residues 1–28 (MAVQQNKKSRSARDMRRSHDALEASTLS) is disordered. The segment covering 11-22 (SARDMRRSHDAL) has biased composition (basic and acidic residues).

The protein belongs to the bacterial ribosomal protein bL32 family.

The chain is Large ribosomal subunit protein bL32 from Pseudomonas savastanoi pv. phaseolicola (strain 1448A / Race 6) (Pseudomonas syringae pv. phaseolicola (strain 1448A / Race 6)).